A 485-amino-acid polypeptide reads, in one-letter code: Glutamyl-tRNA(Gln) amidotransferase subunit A (485 aa).

Residues Lys79 and Ser154 each act as charge relay system in the active site. Ser178 serves as the catalytic Acyl-ester intermediate.

The protein belongs to the amidase family. GatA subfamily. In terms of assembly, heterotrimer of A, B and C subunits.

It carries out the reaction L-glutamyl-tRNA(Gln) + L-glutamine + ATP + H2O = L-glutaminyl-tRNA(Gln) + L-glutamate + ADP + phosphate + H(+). Its function is as follows. Allows the formation of correctly charged Gln-tRNA(Gln) through the transamidation of misacylated Glu-tRNA(Gln) in organisms which lack glutaminyl-tRNA synthetase. The reaction takes place in the presence of glutamine and ATP through an activated gamma-phospho-Glu-tRNA(Gln). The polypeptide is Glutamyl-tRNA(Gln) amidotransferase subunit A (Staphylococcus aureus (strain MW2)).